The primary structure comprises 240 residues: Sec-independent protein translocase protein TatC (240 aa).

A run of 6 helical transmembrane segments spans residues 15–35 (IISI…AKYV), 61–81 (LFIL…PVIL), 103–123 (LLLG…FIVL), 152–172 (FVLK…VLYV), 191–211 (FIVI…TQVL), and 212–232 (MAIP…LATR).

Belongs to the TatC family. In terms of assembly, forms a complex with TatA.

The protein localises to the cell inner membrane. In terms of biological role, part of the twin-arginine translocation (Tat) system that transports large folded proteins containing a characteristic twin-arginine motif in their signal peptide across membranes. This Aquifex aeolicus (strain VF5) protein is Sec-independent protein translocase protein TatC.